We begin with the raw amino-acid sequence, 985 residues long: Disease resistance protein At4g27190 (985 aa).

Residues 24-88 (ANAIKFKSNV…ISKARLKLEE (65 aa)) are a coiled coil. Positions 167 to 429 (IGVWGMGGVG…MAEGFMEELG (263 aa)) constitute an NB-ARC domain. Residue 171–178 (GMGGVGKT) participates in ATP binding. LRR repeat units lie at residues 502–523 (SLRRVSLMNNKLESLPDLVEEF), 526–547 (KTSVLLLQGNFLLKEVPIGFLQ), 551–572 (TLRILNLSGTRIKSFPSCSLLR), 575–597 (SLHSLFLRDCFKLVKLPSLETLA), 598–620 (KLELLDLCGTHILEFPRGLEELK), and 621–643 (RFRHLDLSRTLHLESIPARVVSR).

It belongs to the disease resistance NB-LRR family.

In terms of biological role, disease resistance protein. In Arabidopsis thaliana (Mouse-ear cress), this protein is Disease resistance protein At4g27190.